The chain runs to 261 residues: Pantothenate synthetase (261 aa).

29–36 (MGALHNGH) serves as a coordination point for ATP. The active-site Proton donor is the histidine 36. (R)-pantoate is bound at residue glutamine 60. Glutamine 60 is a binding site for beta-alanine. 147-150 (GEKD) contributes to the ATP binding site. Glutamine 153 contributes to the (R)-pantoate binding site. Residue 184-187 (LSSR) participates in ATP binding.

This sequence belongs to the pantothenate synthetase family. As to quaternary structure, homodimer.

Its subcellular location is the cytoplasm. The catalysed reaction is (R)-pantoate + beta-alanine + ATP = (R)-pantothenate + AMP + diphosphate + H(+). Its pathway is cofactor biosynthesis; (R)-pantothenate biosynthesis; (R)-pantothenate from (R)-pantoate and beta-alanine: step 1/1. Its function is as follows. Catalyzes the condensation of pantoate with beta-alanine in an ATP-dependent reaction via a pantoyl-adenylate intermediate. This Francisella tularensis subsp. tularensis (strain FSC 198) protein is Pantothenate synthetase.